The sequence spans 136 residues: Small ribosomal subunit protein uS8c (136 aa).

This sequence belongs to the universal ribosomal protein uS8 family. As to quaternary structure, part of the 30S ribosomal subunit.

It is found in the plastid. The protein resides in the chloroplast. Functionally, one of the primary rRNA binding proteins, it binds directly to 16S rRNA central domain where it helps coordinate assembly of the platform of the 30S subunit. This Agrostis stolonifera (Creeping bentgrass) protein is Small ribosomal subunit protein uS8c (rps8).